The primary structure comprises 340 residues: Adenosine kinase (340 aa).

The active site involves Asp293.

The protein belongs to the carbohydrate kinase PfkB family. In terms of assembly, monomer. The cofactor is Mg(2+).

It catalyses the reaction adenosine + ATP = AMP + ADP + H(+). Its pathway is purine metabolism; AMP biosynthesis via salvage pathway; AMP from adenosine: step 1/1. In terms of biological role, ATP dependent phosphorylation of adenosine and other related nucleoside analogs to monophosphate derivatives. The polypeptide is Adenosine kinase (adk) (Dictyostelium discoideum (Social amoeba)).